Reading from the N-terminus, the 148-residue chain is Transcriptional regulator MraZ (148 aa).

2 SpoVT-AbrB domains span residues 5–51 (ATSL…PLPA) and 80–123 (AEDV…SMEA).

The protein belongs to the MraZ family. As to quaternary structure, forms oligomers.

Its subcellular location is the cytoplasm. The protein localises to the nucleoid. The polypeptide is Transcriptional regulator MraZ (Methylobacillus flagellatus (strain ATCC 51484 / DSM 6875 / VKM B-1610 / KT)).